Consider the following 363-residue polypeptide: Chorismate synthase (363 aa).

NADP(+) contacts are provided by Arg48 and Arg54. FMN-binding positions include 125–127 (RSS), 238–239 (NA), Gly278, 293–297 (KPTSS), and Arg319.

This sequence belongs to the chorismate synthase family. In terms of assembly, homotetramer. It depends on FMNH2 as a cofactor.

It catalyses the reaction 5-O-(1-carboxyvinyl)-3-phosphoshikimate = chorismate + phosphate. Its pathway is metabolic intermediate biosynthesis; chorismate biosynthesis; chorismate from D-erythrose 4-phosphate and phosphoenolpyruvate: step 7/7. Its function is as follows. Catalyzes the anti-1,4-elimination of the C-3 phosphate and the C-6 proR hydrogen from 5-enolpyruvylshikimate-3-phosphate (EPSP) to yield chorismate, which is the branch point compound that serves as the starting substrate for the three terminal pathways of aromatic amino acid biosynthesis. This reaction introduces a second double bond into the aromatic ring system. This chain is Chorismate synthase, found in Alcanivorax borkumensis (strain ATCC 700651 / DSM 11573 / NCIMB 13689 / SK2).